A 297-amino-acid chain; its full sequence is Ribonuclease HIII (297 aa).

An RNase H type-2 domain is found at 81–297 (IPIIGTDEVG…NTKKAQALLK (217 aa)). Residues Asp-87, Glu-88, and Asp-192 each coordinate a divalent metal cation.

Belongs to the RNase HII family. RnhC subfamily. It depends on Mn(2+) as a cofactor. The cofactor is Mg(2+).

The protein localises to the cytoplasm. It catalyses the reaction Endonucleolytic cleavage to 5'-phosphomonoester.. Its function is as follows. Endonuclease that specifically degrades the RNA of RNA-DNA hybrids. This Streptococcus agalactiae serotype III (strain NEM316) protein is Ribonuclease HIII.